We begin with the raw amino-acid sequence, 453 residues long: Homogentisate 1,2-dioxygenase (453 aa).

His-306 serves as the catalytic Proton acceptor. The Fe cation site is built by His-349 and Glu-355. Positions 364 and 385 each coordinate homogentisate. His-385 contacts Fe cation.

This sequence belongs to the homogentisate dioxygenase family. As to quaternary structure, hexamer; dimer of trimers. It depends on Fe cation as a cofactor.

The catalysed reaction is homogentisate + O2 = 4-maleylacetoacetate + H(+). It functions in the pathway amino-acid degradation; L-phenylalanine degradation; acetoacetate and fumarate from L-phenylalanine: step 4/6. Functionally, involved in the catabolism of homogentisate (2,5-dihydroxyphenylacetate or 2,5-OH-PhAc), a central intermediate in the degradation of phenylalanine and tyrosine. Catalyzes the oxidative ring cleavage of the aromatic ring of homogentisate to yield maleylacetoacetate. This Rhizobium johnstonii (strain DSM 114642 / LMG 32736 / 3841) (Rhizobium leguminosarum bv. viciae) protein is Homogentisate 1,2-dioxygenase.